Here is a 426-residue protein sequence, read N- to C-terminus: uncharacterized protein (426 aa).

To M.leprae L518_C2_147 and M.tuberculosis Rv1524.

This is an uncharacterized protein from Mycobacterium tuberculosis (strain CDC 1551 / Oshkosh).